Reading from the N-terminus, the 328-residue chain is tRNA uridine(34) hydroxylase (328 aa).

Positions 130-224 (LDEDTVVLDT…YGKDPEVQGE (95 aa)) constitute a Rhodanese domain. Catalysis depends on Cys-184, which acts as the Cysteine persulfide intermediate.

Belongs to the TrhO family.

It catalyses the reaction uridine(34) in tRNA + AH2 + O2 = 5-hydroxyuridine(34) in tRNA + A + H2O. Its function is as follows. Catalyzes oxygen-dependent 5-hydroxyuridine (ho5U) modification at position 34 in tRNAs. In Streptococcus pyogenes serotype M49 (strain NZ131), this protein is tRNA uridine(34) hydroxylase.